The sequence spans 323 residues: tRNA dimethylallyltransferase (323 aa).

ATP is bound at residue 12–19 (GPTAAGKT). Residue 14-19 (TAAGKT) coordinates substrate. Interaction with substrate tRNA regions lie at residues 37 to 40 (DSAL) and 161 to 165 (QRLIR).

It belongs to the IPP transferase family. Monomer. The cofactor is Mg(2+).

It catalyses the reaction adenosine(37) in tRNA + dimethylallyl diphosphate = N(6)-dimethylallyladenosine(37) in tRNA + diphosphate. In terms of biological role, catalyzes the transfer of a dimethylallyl group onto the adenine at position 37 in tRNAs that read codons beginning with uridine, leading to the formation of N6-(dimethylallyl)adenosine (i(6)A). In Pseudomonas putida (strain GB-1), this protein is tRNA dimethylallyltransferase.